Here is a 361-residue protein sequence, read N- to C-terminus: D-alanine--D-alanine ligase (361 aa).

The ATP-grasp domain occupies 134–344 (KLLLKSFNIP…FKDLVDNLIN (211 aa)). 167–222 (REALGYPVIVKPAVLGSSIGINVAYSENQIEFFIEEALKYDLTILIEKFIEAREIE) is a binding site for ATP. Aspartate 297, glutamate 311, and asparagine 313 together coordinate Mg(2+).

Belongs to the D-alanine--D-alanine ligase family. The cofactor is Mg(2+). Mn(2+) serves as cofactor.

It is found in the cytoplasm. The catalysed reaction is 2 D-alanine + ATP = D-alanyl-D-alanine + ADP + phosphate + H(+). The protein operates within cell wall biogenesis; peptidoglycan biosynthesis. Cell wall formation. The chain is D-alanine--D-alanine ligase from Borrelia garinii subsp. bavariensis (strain ATCC BAA-2496 / DSM 23469 / PBi) (Borreliella bavariensis).